We begin with the raw amino-acid sequence, 431 residues long: Adenylosuccinate synthetase (431 aa).

GTP-binding positions include G13–K19 and G41–T43. The active-site Proton acceptor is the D14. D14 and G41 together coordinate Mg(2+). IMP contacts are provided by residues D14 to K17, N39 to H42, T130, R144, Q225, T240, and R304. H42 (proton donor) is an active-site residue. Position 300–306 (T300–R306) interacts with substrate. Residues R306, K332–D334, and S414–G416 each bind GTP.

It belongs to the adenylosuccinate synthetase family. As to quaternary structure, homodimer. It depends on Mg(2+) as a cofactor.

It localises to the cytoplasm. It catalyses the reaction IMP + L-aspartate + GTP = N(6)-(1,2-dicarboxyethyl)-AMP + GDP + phosphate + 2 H(+). Its pathway is purine metabolism; AMP biosynthesis via de novo pathway; AMP from IMP: step 1/2. Functionally, plays an important role in the de novo pathway of purine nucleotide biosynthesis. Catalyzes the first committed step in the biosynthesis of AMP from IMP. In Marinobacter nauticus (strain ATCC 700491 / DSM 11845 / VT8) (Marinobacter aquaeolei), this protein is Adenylosuccinate synthetase.